A 350-amino-acid chain; its full sequence is UDP-glucose 4-epimerase (350 aa).

7–38 (KILVTGSAGFIGTHTVVQLLNNGFNVSIIDNF) contacts NAD(+). Ser-133 lines the substrate pocket. The Proton acceptor role is filled by Tyr-157.

The protein belongs to the NAD(P)-dependent epimerase/dehydratase family. NAD(+) is required as a cofactor.

It carries out the reaction UDP-alpha-D-glucose = UDP-alpha-D-galactose. It functions in the pathway carbohydrate metabolism; galactose metabolism. In Pisum sativum (Garden pea), this protein is UDP-glucose 4-epimerase (GALE).